A 288-amino-acid polypeptide reads, in one-letter code: Phosphatidylserine decarboxylase proenzyme (288 aa).

Active-site charge relay system; for autoendoproteolytic cleavage activity residues include aspartate 95, histidine 152, and serine 255. The active-site Schiff-base intermediate with substrate; via pyruvic acid; for decarboxylase activity is the serine 255. Serine 255 is modified (pyruvic acid (Ser); by autocatalysis).

It belongs to the phosphatidylserine decarboxylase family. PSD-B subfamily. Prokaryotic type I sub-subfamily. As to quaternary structure, heterodimer of a large membrane-associated beta subunit and a small pyruvoyl-containing alpha subunit. It depends on pyruvate as a cofactor. Is synthesized initially as an inactive proenzyme. Formation of the active enzyme involves a self-maturation process in which the active site pyruvoyl group is generated from an internal serine residue via an autocatalytic post-translational modification. Two non-identical subunits are generated from the proenzyme in this reaction, and the pyruvate is formed at the N-terminus of the alpha chain, which is derived from the carboxyl end of the proenzyme. The autoendoproteolytic cleavage occurs by a canonical serine protease mechanism, in which the side chain hydroxyl group of the serine supplies its oxygen atom to form the C-terminus of the beta chain, while the remainder of the serine residue undergoes an oxidative deamination to produce ammonia and the pyruvoyl prosthetic group on the alpha chain. During this reaction, the Ser that is part of the protease active site of the proenzyme becomes the pyruvoyl prosthetic group, which constitutes an essential element of the active site of the mature decarboxylase.

The protein localises to the cell membrane. The catalysed reaction is a 1,2-diacyl-sn-glycero-3-phospho-L-serine + H(+) = a 1,2-diacyl-sn-glycero-3-phosphoethanolamine + CO2. It functions in the pathway phospholipid metabolism; phosphatidylethanolamine biosynthesis; phosphatidylethanolamine from CDP-diacylglycerol: step 2/2. Catalyzes the formation of phosphatidylethanolamine (PtdEtn) from phosphatidylserine (PtdSer). The polypeptide is Phosphatidylserine decarboxylase proenzyme (Methylococcus capsulatus (strain ATCC 33009 / NCIMB 11132 / Bath)).